The following is a 310-amino-acid chain: Thiamine-monophosphate kinase (310 aa).

Residues Asp24, Thr38, and Asp39 each contribute to the Mg(2+) site. Asp46 lines the substrate pocket. Asp67 and Asp115 together coordinate Mg(2+). ATP-binding positions include 114–115 and Arg138; that span reads GD. Asp203 is a Mg(2+) binding site. Ser205 contributes to the ATP binding site. Residue Asp206 participates in Mg(2+) binding. Substrate contacts are provided by Glu251 and Trp306.

The protein belongs to the thiamine-monophosphate kinase family.

The catalysed reaction is thiamine phosphate + ATP = thiamine diphosphate + ADP. The protein operates within cofactor biosynthesis; thiamine diphosphate biosynthesis; thiamine diphosphate from thiamine phosphate: step 1/1. Catalyzes the ATP-dependent phosphorylation of thiamine-monophosphate (TMP) to form thiamine-pyrophosphate (TPP), the active form of vitamin B1. The protein is Thiamine-monophosphate kinase of Nitrosopumilus maritimus (strain SCM1).